A 518-amino-acid polypeptide reads, in one-letter code: Stage V sporulation protein B (518 aa).

14 consecutive transmembrane segments (helical) span residues 6 to 26 (FLKG…LGFV), 45 to 65 (MAAP…PVAI), 91 to 111 (ITGV…PVMA), 120 to 140 (TLYP…SSVL), 165 to 185 (ISLV…YAAA), 186 to 206 (GAML…FVCF), 250 to 270 (WFFE…ATVA), 281 to 301 (FAMT…TALV), 326 to 346 (LCLL…DELM), 348 to 368 (VMYG…FFLL), 387 to 407 (AAMM…FVLA), 411 to 431 (SLGI…VTLL), 446 to 466 (IKEY…SSAI), and 478 to 498 (VNLA…LLVF).

The protein belongs to the polysaccharide synthase family.

The protein resides in the cell membrane. In terms of biological role, involved, directly or indirectly, in spore cortex biosynthesis. Affects only indirectly the expression of late sporulation genes. This is Stage V sporulation protein B (spoVB) from Bacillus subtilis (strain 168).